A 525-amino-acid polypeptide reads, in one-letter code: GMP synthase [glutamine-hydrolyzing] (525 aa).

Residues K8–N207 form the Glutamine amidotransferase type-1 domain. The active-site Nucleophile is C85. Catalysis depends on residues H181 and E183. The region spanning W208–R400 is the GMPS ATP-PPase domain. S235–S241 provides a ligand contact to ATP.

In terms of assembly, homodimer.

The enzyme catalyses XMP + L-glutamine + ATP + H2O = GMP + L-glutamate + AMP + diphosphate + 2 H(+). Its pathway is purine metabolism; GMP biosynthesis; GMP from XMP (L-Gln route): step 1/1. Catalyzes the synthesis of GMP from XMP. The sequence is that of GMP synthase [glutamine-hydrolyzing] from Shewanella sp. (strain ANA-3).